The primary structure comprises 806 residues: Transitional endoplasmic reticulum ATPase (806 aa).

A2 bears the N-acetylalanine mark. 2 positions are modified to phosphoserine: S3 and S7. Residue K8 forms a Glycyl lysine isopeptide (Lys-Gly) (interchain with G-Cter in SUMO2) linkage. A Phosphoserine modification is found at S13. Residue K18 forms a Glycyl lysine isopeptide (Lys-Gly) (interchain with G-Cter in SUMO2) linkage. The residue at position 37 (S37) is a Phosphoserine. 247–253 serves as a coordination point for ATP; the sequence is PGTGKTL. An N6,N6,N6-trimethyllysine; by VCPKMT modification is found at K315. ATP contacts are provided by N348 and H384. T436 is subject to Phosphothreonine. S462 carries the phosphoserine modification. Residues K502 and K505 each carry the N6-acetyllysine modification. 521–526 lines the ATP pocket; the sequence is GCGKTL. Position 668 is an N6-acetyllysine; alternate (K668). Position 668 is an N6-succinyllysine; alternate (K668). The residue at position 702 (S702) is a Phosphoserine. The interval 708 to 727 is disordered; the sequence is RRERERQTNPSAMEVEEDDP. K754 bears the N6-acetyllysine mark. The segment at 768–806 is disordered; sequence FGSFRFPSGNQGGAGPSQGSGGGTGGNVYTEDNDDDLYG. A phosphoserine mark is found at S770, S775, and S787. Residues 777–793 are compositionally biased toward gly residues; the sequence is NQGGAGPSQGSGGGTGG. The interaction with UBXN6 stretch occupies residues 797 to 806; the sequence is TEDNDDDLYG. A PIM motif motif is present at residues 802–806; it reads DDLYG. The residue at position 805 (Y805) is a Phosphotyrosine.

This sequence belongs to the AAA ATPase family. As to quaternary structure, homohexamer. Forms a ring-shaped particle of 12.5 nm diameter, that displays 6-fold radial symmetry. Part of a ternary complex containing STX5A, NSFL1C and VCP. NSFL1C forms a homotrimer that binds to one end of a VCP homohexamer. The complex binds to membranes enriched in phosphatidylethanolamine-containing lipids and promotes Golgi membrane fusion. Binds to a heterodimer of NPLOC4 and UFD1, binding to this heterodimer inhibits Golgi-membrane fusion. Interaction with VCIP135 leads to dissociation of the complex via ATP hydrolysis by VCP. Part of a ternary complex containing NPLOC4, UFD1 and VCP. Interacts with NSFL1C-like protein p37; the complex has membrane fusion activity and is required for Golgi and endoplasmic reticulum biogenesis. Interacts with SELENOS and SYVN1, as well as with DERL1 (via SHP-box motif), DERL2 and DERL3; which probably transfer misfolded proteins from the ER to VCP. Interacts with SVIP and DERL1. Component of a complex required to couple retrotranslocation, ubiquitination and deglycosylation composed of NGLY1, SAKS1, AMFR, VCP and RAD23B. Part of a complex composed of STUB1/CHIP, VCP/p97, CHRNA3, and UBXN2A that modulates the ubiquitination and endoplasmic reticulum-associated degradation (ERAD) of CHRNA3. Within the complex UBXN2A acts as a scaffold protein required for the interaction of CHRNA3 with VCP/p97, this interaction also inhibits CHRNA3 ubiquitination by STUB1/CHIP and subsequently ERAD. Interacts with UBXN2A (via UBX domain); the interaction is required for the interaction of CHRNA3 in the STUB1-VCP-UBXN2A complex. Directly interacts with UBXN4 and RNF19A. Interacts with CASR. Interacts with UBE4B and YOD1. Interacts with clathrin. Interacts with RNF103. Interacts with TRIM13 and TRIM21. Component of a VCP/p97-AMFR/gp78 complex that participates in the final step of the endoplasmic reticulum-associated degradation (ERAD) of HMGCR. Interacts directly with AMFR/gp78 (via its VIM). Interacts with RHBDD1 (via C-terminal domain). Interacts with SPRTN; leading to recruitment to stalled replication forks. Interacts with WASHC5. Interacts with UBOX5. Interacts (via N-terminus) with UBXN7, UBXN8, and probably several other UBX domain-containing proteins (via UBX domains); the interactions are mutually exclusive with VIM-dependent interactions such as those with AMFR and SELENOS. Forms a complex with UBQLN1 and UBXN4. Interacts (via the PIM motif) with RNF31 (via the PUB domain). Interacts with RIGI and RNF125; interaction takes place when RIGI is ubiquitinated via 'Lys-63'-linked ubiquitin on its CARD domains, leading to recruit RNF125 and promote ubiquitination and degradation of RIGI. Interacts with BAG6. Interacts with UBXN10. Interacts with UBXN6; the interaction with UBXN6 is direct and competitive with UFD1. Forms a ternary complex with CAV1 and UBXN6. Interacts with PLAA, UBXN6 and YOD1; may form a complex involved in macroautophagy. Interacts with ANKZF1. Interacts with ubiquitin-binding protein FAF1. Interacts with ZFAND2B (via VIM motif); the interaction is direct. Interacts with ZFAND1 (via its ubiquitin-like region); this interaction occurs in an arsenite-dependent manner. Interacts with CCDC47. Interacts with LMBR1L and UBAC2. Interacts with ATXN3. Interacts with TEX264; bridging VCP to covalent DNA-protein cross-links (DPCs). ISGylated. Post-translationally, methylation at Lys-315 catalyzed by VCPKMT is increased in the presence of ASPSCR1. Lys-315 methylation may decrease ATPase activity. In terms of processing, phosphorylated by tyrosine kinases in response to T-cell antigen receptor activation. Phosphorylated in mitotic cells.

Its subcellular location is the cytoplasm. The protein resides in the cytosol. It is found in the endoplasmic reticulum. The protein localises to the nucleus. It localises to the stress granule. It carries out the reaction ATP + H2O = ADP + phosphate + H(+). Necessary for the fragmentation of Golgi stacks during mitosis and for their reassembly after mitosis. Involved in the formation of the transitional endoplasmic reticulum (tER). The transfer of membranes from the endoplasmic reticulum to the Golgi apparatus occurs via 50-70 nm transition vesicles which derive from part-rough, part-smooth transitional elements of the endoplasmic reticulum (tER). Vesicle budding from the tER is an ATP-dependent process. The ternary complex containing UFD1, VCP and NPLOC4 binds ubiquitinated proteins and is necessary for the export of misfolded proteins from the ER to the cytoplasm, where they are degraded by the proteasome. The NPLOC4-UFD1-VCP complex regulates spindle disassembly at the end of mitosis and is necessary for the formation of a closed nuclear envelope. Regulates E3 ubiquitin-protein ligase activity of RNF19A. Component of the VCP/p97-AMFR/gp78 complex that participates in the final step of the sterol-mediated ubiquitination and endoplasmic reticulum-associated degradation (ERAD) of HMGCR. Mediates the endoplasmic reticulum-associated degradation of CHRNA3 in cortical neurons as part of the STUB1-VCP-UBXN2A complex. Involved in endoplasmic reticulum stress-induced pre-emptive quality control, a mechanism that selectively attenuates the translocation of newly synthesized proteins into the endoplasmic reticulum and reroutes them to the cytosol for proteasomal degradation. Involved in clearance process by mediating G3BP1 extraction from stress granules. Also involved in DNA damage response: recruited to double-strand breaks (DSBs) sites in a RNF8- and RNF168-dependent manner and promotes the recruitment of TP53BP1 at DNA damage sites. Recruited to stalled replication forks by SPRTN: may act by mediating extraction of DNA polymerase eta (POLH) to prevent excessive translesion DNA synthesis and limit the incidence of mutations induced by DNA damage. Together with SPRTN metalloprotease, involved in the repair of covalent DNA-protein cross-links (DPCs) during DNA synthesis. Involved in interstrand cross-link repair in response to replication stress by mediating unloading of the ubiquitinated CMG helicase complex. Mediates extraction of PARP1 trapped to chromatin: recognizes and binds ubiquitinated PARP1 and promotes its removal. Required for cytoplasmic retrotranslocation of stressed/damaged mitochondrial outer-membrane proteins and their subsequent proteasomal degradation. Essential for the maturation of ubiquitin-containing autophagosomes and the clearance of ubiquitinated protein by autophagy. Acts as a negative regulator of type I interferon production by interacting with RIGI: interaction takes place when RIGI is ubiquitinated via 'Lys-63'-linked ubiquitin on its CARD domains, leading to recruit RNF125 and promote ubiquitination and degradation of RIGI. May play a role in the ubiquitin-dependent sorting of membrane proteins to lysosomes where they undergo degradation. May more particularly play a role in caveolins sorting in cells. By controlling the steady-state expression of the IGF1R receptor, indirectly regulates the insulin-like growth factor receptor signaling pathway. This chain is Transitional endoplasmic reticulum ATPase (VCP), found in Bos taurus (Bovine).